The following is a 444-amino-acid chain: Homogentisate 1,2-dioxygenase (444 aa).

His298 (proton acceptor) is an active-site residue. Residues His341 and Glu347 each contribute to the Fe cation site. 2 residues coordinate homogentisate: Tyr356 and His377. His377 is a binding site for Fe cation.

It belongs to the homogentisate dioxygenase family. Hexamer; dimer of trimers. The cofactor is Fe cation.

The enzyme catalyses homogentisate + O2 = 4-maleylacetoacetate + H(+). It participates in amino-acid degradation; L-phenylalanine degradation; acetoacetate and fumarate from L-phenylalanine: step 4/6. Functionally, involved in the catabolism of homogentisate (2,5-dihydroxyphenylacetate or 2,5-OH-PhAc), a central intermediate in the degradation of phenylalanine and tyrosine. Catalyzes the oxidative ring cleavage of the aromatic ring of homogentisate to yield maleylacetoacetate. This Burkholderia orbicola (strain AU 1054) protein is Homogentisate 1,2-dioxygenase.